A 368-amino-acid chain; its full sequence is Xaa-Pro dipeptidase (368 aa).

Mn(2+)-binding residues include aspartate 223, aspartate 234, histidine 298, glutamate 327, and glutamate 341.

Belongs to the peptidase M24B family. The cofactor is Mn(2+).

It is found in the cytoplasm. It catalyses the reaction Xaa-L-Pro dipeptide + H2O = an L-alpha-amino acid + L-proline. In Lactobacillus delbrueckii subsp. lactis, this protein is Xaa-Pro dipeptidase (pepQ).